We begin with the raw amino-acid sequence, 144 residues long: Large ribosomal subunit protein uL14 (144 aa).

Positions 107–144 (NEGYTHSQHSNQREGGERIQAQPSPPHARRAVKTSFCR) are disordered.

Belongs to the universal ribosomal protein uL14 family. As to quaternary structure, part of the 50S ribosomal subunit. Forms a cluster with proteins L3 and L19. In the 70S ribosome, L14 and L19 interact and together make contacts with the 16S rRNA in bridges B5 and B8.

Binds to 23S rRNA. Forms part of two intersubunit bridges in the 70S ribosome. This chain is Large ribosomal subunit protein uL14, found in Xanthobacter autotrophicus (strain ATCC BAA-1158 / Py2).